We begin with the raw amino-acid sequence, 151 residues long: MEEEGEAQGRAVPGGRLNMSHGFVHHIRRNQLARDDYDREVKQAKEKQKKRYTPGPTRQKKPDLQVYHPRQREKAHTTETLKDEPNDNGTQLFCLDFEADGGEVTSIIVYEDDDAEQLATMISNQNQLEGDMREALKQRIQEEISKRRVQR.

A disordered region spans residues 1 to 89 (MEEEGEAQGR…TLKDEPNDNG (89 aa)). 2 stretches are compositionally biased toward basic and acidic residues: residues 32 to 46 (LARD…QAKE) and 70 to 85 (RQRE…KDEP).

Belongs to the UPF0561 family.

This is UPF0561 protein C2orf68 homolog from Xenopus laevis (African clawed frog).